A 266-amino-acid chain; its full sequence is MVAKNVKTFALGVEYDGSYYHGWQRQKIVPSIQEEIEKALSIIANHKIDVVCAGRTDAGVHSIGQVIHFKTTANRKKSSWSIGVNSYLSENISVVWVKEVTENFHARYSAITRSYRYIIYNYSLRSAIFQTKLNHIYRKLNVDKMHFEAQFLLGEHDFTSFRALGCQSHSPWRNITKLNVFRFHNWVVVDITANSFLHHMVRNIVGSLIEVGISKKKEYWIKDLLEKKDRSHAGATAPAKGLYLVYVEYPLHFNLPRSAYTSIFFK.

The active-site Nucleophile is the Asp-57. Substrate is bound at residue Tyr-115.

This sequence belongs to the tRNA pseudouridine synthase TruA family. As to quaternary structure, homodimer.

It carries out the reaction uridine(38/39/40) in tRNA = pseudouridine(38/39/40) in tRNA. Its function is as follows. Formation of pseudouridine at positions 38, 39 and 40 in the anticodon stem and loop of transfer RNAs. The sequence is that of tRNA pseudouridine synthase A from Buchnera aphidicola subsp. Acyrthosiphon pisum (strain Tuc7).